A 111-amino-acid polypeptide reads, in one-letter code: Putative single-stranded DNA-binding protein ycf41 (111 aa).

One can recognise an SSB domain in the interval 1–98 (MNKCNLLVQI…FSTSRIFKYK (98 aa)).

It localises to the plastid. The protein resides in the chloroplast. The polypeptide is Putative single-stranded DNA-binding protein ycf41 (ycf41) (Porphyra purpurea (Red seaweed)).